We begin with the raw amino-acid sequence, 727 residues long: MTAFEEFGVLPELGMATDELDWTLPTDVQAEAIPLILGGGDVLMAAETGSGKTGAFCLPILQIVWETLRDLEEGKAGKGGAIGGAVTPWTMSFFDRGNALAVTPDGLRCQSREFKEWHGCRATTGVRGKGKFYFEATVTDEGLCRVGWSTQQANLDLGTCRMGFGFGGTGKKSNNRQFDDYGEAFGKADVIGCLLDLKNQEVSFTKNGQNLGVAFRLPDNLAKETFYPAVVLKNAEMQFNFGKTDFKYAPGNGFVGACQAGPEHSKANPITGPAAGAPSAKPAPNAPQAIIMEPSRELAEQTYNQIEKFKYHLSNPEVRSLLLIGGVRLEEQKAQLMQGTHIVVGTPGRLEEMINSGLVLLTHCRFFVLDEADALLKQGYTELIDRLHKQIPKITSDGRRLQMVVCSATLHAFEVKKMAERLMHFPTWVDLKGEDAVPETVHHVVCLVDPQMDTTWQSLRQPIGTDGVHDRDNVHPGNHSKETLSQAVKLLKGEYCVHAIDKHNMDRAIIFCRTKQDCDNLERFLRQRGGKHYSCVCLHGDRKPQERKENLEMFKRQQVKFLICTDVAARGLDITGLPFMINVTLPDDKTNYVHRIGRVGRAERMGLAISLVATVPEKVWYHGEWCKSRGRSCNNTNLTEVRGCCIWYNEPNLLAEVEDHLNITIQQVDKTMDVPVNDFDGKVVYGQKNLRTGSGYEDHVEQLVPTVRKLTELELQSQSLFLKRLKV.

One can recognise a Helicase ATP-binding domain in the interval 2–428 (TAFEEFGVLP…AERLMHFPTW (427 aa)). 46–53 (AETGSGKT) provides a ligand contact to ATP. Positions 69-246 (RDLEEGKAGK…MQFNFGKTDF (178 aa)) constitute a B30.2/SPRY domain. The short motif at 370 to 373 (DEAD) is the DEAD box element. Residues 483-676 (TLSQAVKLLK…QVDKTMDVPV (194 aa)) form the Helicase C-terminal domain.

The protein belongs to the DEAD box helicase family. DDX1 subfamily.

It carries out the reaction ATP + H2O = ADP + phosphate + H(+). Functionally, acts as an ATP-dependent RNA helicase, able to unwind both RNA-RNA and RNA-DNA duplexes. Possesses 5' single-stranded RNA overhang nuclease activity. The protein is ATP-dependent RNA helicase Ddx1 (Ddx1) of Drosophila melanogaster (Fruit fly).